Here is a 343-residue protein sequence, read N- to C-terminus: Tribbles homolog 2 (343 aa).

Residues 25–50 (EELSSIRSAEPSQSFSPNLGSPSPPE) are disordered. Positions 29 to 45 (SIRSAEPSQSFSPNLGS) are enriched in polar residues. Residues 61 to 308 (IGKYLLLEPL…SQEILDHPWF (248 aa)) form the Protein kinase domain.

The protein belongs to the protein kinase superfamily. CAMK Ser/Thr protein kinase family. Tribbles subfamily.

The protein localises to the cytoplasm. The protein resides in the cytoskeleton. Interacts with MAPK kinases and regulates activation of MAP kinases. Does not display kinase activity. This chain is Tribbles homolog 2, found in Mus musculus (Mouse).